A 341-amino-acid polypeptide reads, in one-letter code: uncharacterized protein (341 aa).

3 helical membrane passes run 6–26 (IIAG…TTLW), 63–83 (LLLC…WVLI), and 137–157 (AQGL…LSAV).

The protein resides in the cell membrane. This is an uncharacterized protein from Bacillus subtilis (strain 168).